The chain runs to 211 residues: Endonuclease III (211 aa).

Residues 111-130 (AHALESLPGVGHKTANVVLN) enclose the HhH domain. The [4Fe-4S] cluster site is built by Cys-190, Cys-197, Cys-200, and Cys-206.

It belongs to the Nth/MutY family. [4Fe-4S] cluster is required as a cofactor.

It catalyses the reaction 2'-deoxyribonucleotide-(2'-deoxyribose 5'-phosphate)-2'-deoxyribonucleotide-DNA = a 3'-end 2'-deoxyribonucleotide-(2,3-dehydro-2,3-deoxyribose 5'-phosphate)-DNA + a 5'-end 5'-phospho-2'-deoxyribonucleoside-DNA + H(+). Its function is as follows. DNA repair enzyme that has both DNA N-glycosylase activity and AP-lyase activity. The DNA N-glycosylase activity releases various damaged pyrimidines from DNA by cleaving the N-glycosidic bond, leaving an AP (apurinic/apyrimidinic) site. The AP-lyase activity cleaves the phosphodiester bond 3' to the AP site by a beta-elimination, leaving a 3'-terminal unsaturated sugar and a product with a terminal 5'-phosphate. This chain is Endonuclease III, found in Treponema pallidum (strain Nichols).